Consider the following 465-residue polypeptide: ATP synthase subunit beta (465 aa).

152–159 (GGAGVGKT) is a binding site for ATP.

It belongs to the ATPase alpha/beta chains family. As to quaternary structure, F-type ATPases have 2 components, CF(1) - the catalytic core - and CF(0) - the membrane proton channel. CF(1) has five subunits: alpha(3), beta(3), gamma(1), delta(1), epsilon(1). CF(0) has three main subunits: a(1), b(2) and c(9-12). The alpha and beta chains form an alternating ring which encloses part of the gamma chain. CF(1) is attached to CF(0) by a central stalk formed by the gamma and epsilon chains, while a peripheral stalk is formed by the delta and b chains.

The protein resides in the cell inner membrane. It carries out the reaction ATP + H2O + 4 H(+)(in) = ADP + phosphate + 5 H(+)(out). Produces ATP from ADP in the presence of a proton gradient across the membrane. The catalytic sites are hosted primarily by the beta subunits. The polypeptide is ATP synthase subunit beta (Campylobacter concisus (strain 13826)).